The chain runs to 170 residues: Large ribosomal subunit protein uL11 (170 aa).

The protein belongs to the universal ribosomal protein uL11 family. As to quaternary structure, part of the ribosomal stalk of the 50S ribosomal subunit. Interacts with L10 and the large rRNA to form the base of the stalk. L10 forms an elongated spine to which L12 dimers bind in a sequential fashion forming a multimeric L10(L12)X complex.

In terms of biological role, forms part of the ribosomal stalk which helps the ribosome interact with GTP-bound translation factors. The chain is Large ribosomal subunit protein uL11 from Sulfolobus acidocaldarius (strain ATCC 33909 / DSM 639 / JCM 8929 / NBRC 15157 / NCIMB 11770).